Consider the following 1162-residue polypeptide: Lysine-specific demethylase 2A (1162 aa).

Serine 28 is modified (phosphoserine). Residues 148–316 (FSHTRLENMV…MQLKIYNIED (169 aa)) enclose the JmjC domain. Threonine 209 contributes to the substrate binding site. Fe cation is bound by residues histidine 212 and aspartate 214. Lysine 229 contacts substrate. Histidine 284 provides a ligand contact to Fe cation. The interval 367-389 (GLESGNGDEEAVDREPRRLSSRR) is disordered. Serine 390 and serine 394 each carry phosphoserine. A Glycyl lysine isopeptide (Lys-Gly) (interchain with G-Cter in SUMO2) cross-link involves residue lysine 505. A disordered region spans residues 532 to 557 (VPTIPITKPHTMKPAPRLTPVRPAAA). Residue threonine 550 is modified to Phosphothreonine. Serine 558 is subject to Phosphoserine. The CXXC-type zinc finger occupies 564–610 (ARRRRVRCRKCKACVQGECGVCHYCRDMKKFGGPGRMKQSCVLRQCL). The Zn(2+) site is built by cysteine 571, cysteine 574, cysteine 577, cysteine 582, cysteine 585, cysteine 588, cysteine 604, cysteine 609, cysteine 620, and cysteine 623. The PHD-type zinc-finger motif lies at 617-678 (SVTCSLCGEV…CWECPKCYQE (62 aa)). The residue at position 632 (threonine 632) is a Phosphothreonine. Zn(2+) contacts are provided by cysteine 642, cysteine 645, histidine 650, cysteine 653, cysteine 672, and cysteine 675. Phosphoserine is present on serine 692. The segment at 704-789 (PLRSCDEPLT…PSGKKELSEV (86 aa)) is disordered. At threonine 713 the chain carries Phosphothreonine. A phosphoserine mark is found at serine 718 and serine 731. Composition is skewed to basic and acidic residues over residues 746 to 757 (SDHHSASRDERF) and 771 to 789 (TMVREKENNPSGKKELSEV). Phosphoserine is present on residues serine 825, serine 832, serine 869, and serine 883. Residues 839–887 (HCPARTPQRGDEEGLGGEEEEEEEEEEEDDSAEEGGAARLNGRGSWAQD) form a disordered region. Over residues 851–871 (EGLGGEEEEEEEEEEEDDSAE) the composition is skewed to acidic residues. Residues 889-936 (DESWMQREVWMSVFRYLSRRELCECMRVCKTWYKWCCDKRLWTKIDLS) enclose the F-box domain. LRR repeat units lie at residues 961-982 (WTNISKKQLTWLVNRLPGLKDL) and 984-1010 (LAGCSWSAVSALSTSSCPLLRTLDLRW). At arginine 1020 the chain carries ADP-ribosylarginine. LRR repeat units follow at residues 1048-1073 (GLDITDATLRLIIRHMPLLSRLDLSH), 1074-1103 (CSHLTDQSSNLLTAVGSSTRYSLTELNMAG), 1104-1128 (CNKLTDQTLIYLRRIANVTLIDLRG), and 1129-1156 (CKQITRKACEHFISDLSINSLYCLSDEK).

This sequence belongs to the JHDM1 histone demethylase family. As to quaternary structure, interacts with CBX5/HP1A; the interaction promotes CBX5 localization to chromatin. The SKP1-KDM2A complex interacts with UBB. Part of a SCF (SKP1-cullin-F-box) protein ligase complex. It depends on Fe(2+) as a cofactor. Mono-ADP-ribosylated at Arg-1020 in response to DNA damage, leading to displacement from chromatin, resulting in increased dimethylation of histone H3 at 'Lys-36'. Widely expressed, with highest levels in brain, testis and ovary, followed by lung.

The protein localises to the nucleus. It localises to the nucleoplasm. It is found in the chromosome. The catalysed reaction is N(6),N(6)-dimethyl-L-lysyl(36)-[histone H3] + 2 2-oxoglutarate + 2 O2 = L-lysyl(36)-[histone H3] + 2 formaldehyde + 2 succinate + 2 CO2. Its function is as follows. Histone demethylase that specifically demethylates 'Lys-36' of histone H3, thereby playing a central role in histone code. Preferentially demethylates dimethylated H3 'Lys-36' residue while it has weak or no activity for mono- and tri-methylated H3 'Lys-36'. May also recognize and bind to some phosphorylated proteins and promote their ubiquitination and degradation. Required to maintain the heterochromatic state. Associates with centromeres and represses transcription of small non-coding RNAs that are encoded by the clusters of satellite repeats at the centromere. Required to sustain centromeric integrity and genomic stability, particularly during mitosis. Regulates circadian gene expression by repressing the transcriptional activator activity of CLOCK-BMAL1 heterodimer and RORA in a catalytically-independent manner. The sequence is that of Lysine-specific demethylase 2A (KDM2A) from Homo sapiens (Human).